A 203-amino-acid polypeptide reads, in one-letter code: Pyrrolidone-carboxylate peptidase (203 aa).

Active-site residues include Glu-78, Cys-141, and His-165.

The protein belongs to the peptidase C15 family. Homotetramer.

It is found in the cytoplasm. The catalysed reaction is Release of an N-terminal pyroglutamyl group from a polypeptide, the second amino acid generally not being Pro.. Functionally, removes 5-oxoproline from various penultimate amino acid residues except L-proline. The chain is Pyrrolidone-carboxylate peptidase from Thermoanaerobacter pseudethanolicus (strain ATCC 33223 / 39E) (Clostridium thermohydrosulfuricum).